Reading from the N-terminus, the 428-residue chain is Chaperone SurA (428 aa).

An N-terminal signal peptide occupies residues 1-13 (MLGALLLSGAVHA). PpiC domains are found at residues 164–265 (SEEF…KLLE) and 276–375 (RDEV…EVLG).

It is found in the periplasm. It carries out the reaction [protein]-peptidylproline (omega=180) = [protein]-peptidylproline (omega=0). In terms of biological role, chaperone involved in the correct folding and assembly of outer membrane proteins. Recognizes specific patterns of aromatic residues and the orientation of their side chains, which are found more frequently in integral outer membrane proteins. May act in both early periplasmic and late outer membrane-associated steps of protein maturation. In Pseudomonas syringae pv. tomato (strain ATCC BAA-871 / DC3000), this protein is Chaperone SurA.